The primary structure comprises 225 residues: Recoverin family protein DDB_G0274781 (225 aa).

The span at 1–13 (MGNKQGKSPNNSK) shows a compositional bias: low complexity. Residues 1–20 (MGNKQGKSPNNSKGGKKYKI) are disordered. G2 is lipidated: N-myristoyl glycine. EF-hand domains lie at 78–113 (DNSP…LCKG), 114–149 (TAEE…AWIS), and 174–209 (MAQI…HPKI). Positions 91, 93, 95, 97, 102, 127, 129, 131, 133, 138, 187, 189, 191, 193, and 198 each coordinate Ca(2+).

The protein belongs to the recoverin family.

This chain is Recoverin family protein DDB_G0274781, found in Dictyostelium discoideum (Social amoeba).